A 464-amino-acid chain; its full sequence is ATP synthase subunit beta 2 (464 aa).

An ATP-binding site is contributed by 147 to 154 (GGAGVGKT).

It belongs to the ATPase alpha/beta chains family. As to quaternary structure, F-type ATPases have 2 components, CF(1) - the catalytic core - and CF(0) - the membrane proton channel. CF(1) has five subunits: alpha(3), beta(3), gamma(1), delta(1), epsilon(1). CF(0) has four main subunits: a(1), b(1), b'(1) and c(9-12).

It localises to the cell inner membrane. It carries out the reaction ATP + H2O + 4 H(+)(in) = ADP + phosphate + 5 H(+)(out). Its function is as follows. Produces ATP from ADP in the presence of a proton gradient across the membrane. The catalytic sites are hosted primarily by the beta subunits. The polypeptide is ATP synthase subunit beta 2 (Cereibacter sphaeroides (strain ATCC 17023 / DSM 158 / JCM 6121 / CCUG 31486 / LMG 2827 / NBRC 12203 / NCIMB 8253 / ATH 2.4.1.) (Rhodobacter sphaeroides)).